We begin with the raw amino-acid sequence, 436 residues long: Alpha-2 adrenergic receptor (436 aa).

Over 1 to 27 (MDVTQSNATKDDANITVTPWPYTETAA) the chain is Extracellular. N-linked (GlcNAc...) asparagine glycans are attached at residues asparagine 7 and asparagine 14. Residues 28–52 (AFIILVVSVIILVSIVGNVLVIVAV) form a helical membrane-spanning segment. The Cytoplasmic portion of the chain corresponds to 53–64 (LTSRALRAPQNL). Residues 65–90 (FLVSLACADILVATLVIPFSLANEIM) form a helical membrane-spanning segment. At 91 to 100 (GYWFFGSTWC) the chain is on the extracellular side. The cysteines at positions 100 and 173 are disulfide-linked. Residues 101 to 123 (AFYLALDVLFCTSSIVHLCAISL) traverse the membrane as a helical segment. The Cytoplasmic segment spans residues 124-144 (DRYWSVTKAVSYNLKRTPKRI). The helical transmembrane segment at 145–167 (KSMIAVVWVISAVISFPPLIMTK) threads the bilayer. Residues 168–178 (HDEKECLINDE) are Extracellular-facing. The chain crosses the membrane as a helical span at residues 179–202 (TWYILSSSLVSFFAPGFIMITVYC). At 203–329 (KIYRVAKQRS…QMREKRFTFV (127 aa)) the chain is on the cytoplasmic side. The tract at residues 238-280 (KFEKESPSSNSSESNQRQEELDDIDLEESATSDNKPKSSRFSN) is disordered. Residues 257 to 267 (ELDDIDLEESA) are compositionally biased toward acidic residues. Residues 330 to 353 (LTVVMGVFVLCWFPFFFTYSLHAI) traverse the membrane as a helical segment. The Extracellular portion of the chain corresponds to 354-366 (CGDSCEPPEALFK). A helical membrane pass occupies residues 367 to 387 (LFFWIGYCNSSVNPIIYTIFN). The Cytoplasmic portion of the chain corresponds to 388–436 (RDFRKAFKKICLLDCAAHLRDSCLGTLGRLNAKCIFECHQKSNQEETAN).

This sequence belongs to the G-protein coupled receptor 1 family.

Its subcellular location is the cell membrane. Functionally, alpha-2 adrenergic receptors mediate the catecholamine-induced inhibition of adenylate cyclase through the action of G proteins. The protein is Alpha-2 adrenergic receptor of Carassius auratus (Goldfish).